Consider the following 91-residue polypeptide: MEKQCSKFIVSGHVQGVGFCYHTSHQGLKLGLTGYAKNLNNGDVEVVACGTPERLEELYLWLQEGPKTASVRQVRRLSSELEHDYQGFEIL.

Positions 5–91 constitute an Acylphosphatase-like domain; that stretch reads CSKFIVSGHV…EHDYQGFEIL (87 aa). Asn-38 is a catalytic residue.

The protein belongs to the acylphosphatase family.

It catalyses the reaction an acyl phosphate + H2O = a carboxylate + phosphate + H(+). This chain is Acylphosphatase (acyP), found in Vibrio cholerae serotype O1 (strain ATCC 39541 / Classical Ogawa 395 / O395).